The primary structure comprises 152 residues: Endoribonuclease YbeY (152 aa).

Zn(2+) is bound by residues H113, H117, and H123.

The protein belongs to the endoribonuclease YbeY family. Requires Zn(2+) as cofactor.

It localises to the cytoplasm. Single strand-specific metallo-endoribonuclease involved in late-stage 70S ribosome quality control and in maturation of the 3' terminus of the 16S rRNA. In Pseudoalteromonas atlantica (strain T6c / ATCC BAA-1087), this protein is Endoribonuclease YbeY.